The chain runs to 122 residues: Large ribosomal subunit protein uL14 (122 aa).

The protein belongs to the universal ribosomal protein uL14 family. Part of the 50S ribosomal subunit. Forms a cluster with proteins L3 and L19. In the 70S ribosome, L14 and L19 interact and together make contacts with the 16S rRNA in bridges B5 and B8.

In terms of biological role, binds to 23S rRNA. Forms part of two intersubunit bridges in the 70S ribosome. The protein is Large ribosomal subunit protein uL14 of Orientia tsutsugamushi (strain Ikeda) (Rickettsia tsutsugamushi).